The following is a 583-amino-acid chain: GTP diphosphokinase CRSH1, chloroplastic (583 aa).

Over residues 1–13 (MATAATTSAAAIP) the composition is skewed to low complexity. The tract at residues 1–68 (MATAATTSAA…SSSSSTPAEG (68 aa)) is disordered. The transit peptide at 1 to 69 (MATAATTSAA…SSSSTPAEGG (69 aa)) directs the protein to the chloroplast. Residues 19 to 39 (RRQHPHPRRPGLRPRRLHRLR) show a composition bias toward basic residues. A compositionally biased stretch (low complexity) spans 40–66 (LPAQAAAAAAASSPSTSSSSSSSSTPA). The region spanning 119-219 (ALARALAIAA…LELALKLDMM (101 aa)) is the HD domain. 2 consecutive EF-hand domains span residues 473 to 508 (GDSNCTNRAFCQLDKNGDGRISIEELTEVMEDLGAG) and 510 to 542 (KDAKELMHLLDANSDGSLSSDEFEAFQRQIELM). Residues D486, N488, D490, R492, E497, D520, N522, D524, S526, and E531 each coordinate Ca(2+).

The protein belongs to the RelA/SpoT family. Expressed in roots and shoots.

Its subcellular location is the plastid. It localises to the chloroplast. It carries out the reaction GTP + ATP = guanosine 3'-diphosphate 5'-triphosphate + AMP. Its activity is regulated as follows. Activated by calcium. Its function is as follows. Possesses calcium-dependent ppGpp (guanosine 3'-diphosphate 5'-diphosphate) synthetase activity in vitro and is able to functionally complement E.coli relA mutants. May be involved in a rapid plant ppGpp-mediated response to pathogens and other stresses. The polypeptide is GTP diphosphokinase CRSH1, chloroplastic (Oryza sativa subsp. japonica (Rice)).